A 69-amino-acid polypeptide reads, in one-letter code: Small ribosomal subunit protein uS14 (69 aa).

The Zn(2+) site is built by Cys-33, Cys-36, Cys-51, and Cys-54.

This sequence belongs to the universal ribosomal protein uS14 family. Zinc-binding uS14 subfamily. Part of the 30S ribosomal subunit. The cofactor is Zn(2+).

Binds 16S rRNA, required for the assembly of 30S particles. The protein is Small ribosomal subunit protein uS14 of Nanoarchaeum equitans (strain Kin4-M).